The primary structure comprises 539 residues: MAKTIAFDKKARRGLERGLNALADAVKVTLGPKGRNVVLEKKWGAPTITNDGVSIAKEIELEDPYEKIGAELVKEVAKKTDDVAGDGTTTATVLAQALVREGLRNVAAGANPLGLKRGIEKAVEAVTEHLLKAAKEVETKDQIAATAGISAGDPAIGELIAEAMDKVGKEGVITVEESNTFGLQLELTEGMRFDKGFISGYFATDAERQEAVLEDPYVLLVSGKISTVKDLLPLLEKVIQSGKPLAIIAEDVEGEALVTLIVNKIRGTFKSVAIKAPGFGDRRKAMLQDMAILTGGQVISEEIGLSLDTAGLEVLGQARQVVVTKDETTIVDGAGSKEQIAGRVSQIRAEIENSDSDYDREKLQERLAKLAGGVAVIKAGAATEDLKERKHRIEDAVRNAKAAVEEGIVAGGGSSLAQSGTVFDSXALEGDEATGANIVKVALDAPVKQIAVNAGLEPGVVAEKVRNSPAGTGLNAATGVYEDLLAAGINDPVKVTRSALQNAASIAALFLTTEAVVADKPEKAGAPVDPTGGMGGMDF.

ATP contacts are provided by residues 29–32 (TLGP), 86–90 (DGTTT), G412, 475–477 (NAA), and D491.

This sequence belongs to the chaperonin (HSP60) family. As to quaternary structure, forms a cylinder of 14 subunits composed of two heptameric rings stacked back-to-back. Interacts with the co-chaperonin GroES.

The protein resides in the cytoplasm. The enzyme catalyses ATP + H2O + a folded polypeptide = ADP + phosphate + an unfolded polypeptide.. Together with its co-chaperonin GroES, plays an essential role in assisting protein folding. The GroEL-GroES system forms a nano-cage that allows encapsulation of the non-native substrate proteins and provides a physical environment optimized to promote and accelerate protein folding. This chain is Chaperonin GroEL, found in Tsukamurella tyrosinosolvens.